A 584-amino-acid polypeptide reads, in one-letter code: Transcription factor COE1 (584 aa).

M1 carries the N-acetylmethionine modification. Positions 1–14 (MFGIQESIQRSGSS) are enriched in polar residues. Residues 1–21 (MFGIQESIQRSGSSMKEEPLG) form a disordered region. Residue K16 forms a Glycyl lysine isopeptide (Lys-Gly) (interchain with G-Cter in SUMO1); alternate linkage. K16 is covalently cross-linked (Glycyl lysine isopeptide (Lys-Gly) (interchain with G-Cter in SUMO2); alternate). The interval 63-66 (RKSN) is interaction with DNA. Residues 151 to 170 (CRVLLTHEIMCSRCCDKKSC) form a C5-type zinc finger. 2 interaction with DNA regions span residues 197-204 (NCLKNAGN) and 236-239 (NNSK). In terms of domain architecture, IPT/TIG spans 255–338 (PCIKAISPSE…KGTPGRFIYT (84 aa)). The tract at residues 450 to 473 (GFTRNSSSVSPHGYVPSTTPQQTN) is disordered.

This sequence belongs to the COE family. As to quaternary structure, homodimer. Interacts with ZNF423 and ZNF521, leading to prevent EBF1 to bind DNA and activate target genes. Interacts with CCR4-NOT component CNOT3. As to expression, expressed exclusively in olfactory receptor neurons and their precursors.

The protein resides in the nucleus. In terms of biological role, key pioneer transcription factor of B-cell specification and commitment. Recognizes variations of the palindromic sequence 5'-ATTCCCNNGGGAATT-3'. Operates in a transcription factor network to activate B-cell-specific genes and repress genes associated with alternative cell fates. For instance, positively regulates many B-cell specific genes including BCR or CD40 while repressing genes that direct cells into alternative lineages, including GATA3 and TCF7 for the T-cell lineage. In addition to its role during lymphopoiesis, controls the thermogenic gene program in adipocytes during development and in response to environmental cold. The chain is Transcription factor COE1 (Ebf1) from Rattus norvegicus (Rat).